Reading from the N-terminus, the 169-residue chain is Regulator of sigma D (169 aa).

The protein belongs to the Rsd/AlgQ family. In terms of assembly, interacts with RpoD.

The protein localises to the cytoplasm. Binds RpoD and negatively regulates RpoD-mediated transcription activation by preventing the interaction between the primary sigma factor RpoD with the catalytic core of the RNA polymerase and with promoter DNA. May be involved in replacement of the RNA polymerase sigma subunit from RpoD to RpoS during the transition from exponential growth to the stationary phase. This Yersinia pestis protein is Regulator of sigma D.